Reading from the N-terminus, the 41-residue chain is Large ribosomal subunit protein bL36 (41 aa).

This sequence belongs to the bacterial ribosomal protein bL36 family.

The polypeptide is Large ribosomal subunit protein bL36 (Bartonella quintana (strain Toulouse) (Rochalimaea quintana)).